Reading from the N-terminus, the 215-residue chain is Cytochrome b6 (215 aa).

The chain crosses the membrane as a helical span at residues 32-52; that stretch reads IFYCLGGITLTCFIVQVATGF. Cys-35 contributes to the heme c binding site. Heme b contacts are provided by His-86 and His-100. 3 helical membrane passes run 90–110, 116–136, and 186–206; these read ASMM…TGGF, LTWV…VTGY, and AHTF…FVMI. His-187 and His-202 together coordinate heme b.

The protein belongs to the cytochrome b family. PetB subfamily. The 4 large subunits of the cytochrome b6-f complex are cytochrome b6, subunit IV (17 kDa polypeptide, PetD), cytochrome f and the Rieske protein, while the 4 small subunits are PetG, PetL, PetM and PetN. The complex functions as a dimer. Requires heme b as cofactor. It depends on heme c as a cofactor.

It localises to the plastid. The protein localises to the chloroplast thylakoid membrane. Its function is as follows. Component of the cytochrome b6-f complex, which mediates electron transfer between photosystem II (PSII) and photosystem I (PSI), cyclic electron flow around PSI, and state transitions. The sequence is that of Cytochrome b6 from Emiliania huxleyi (Coccolithophore).